We begin with the raw amino-acid sequence, 417 residues long: Serine hydroxymethyltransferase (417 aa).

(6S)-5,6,7,8-tetrahydrofolate is bound by residues Leu122 and 126 to 128; that span reads GHL. An N6-(pyridoxal phosphate)lysine modification is found at Lys230. 355–357 provides a ligand contact to (6S)-5,6,7,8-tetrahydrofolate; sequence SPF.

Belongs to the SHMT family. In terms of assembly, homodimer. It depends on pyridoxal 5'-phosphate as a cofactor.

It is found in the cytoplasm. It carries out the reaction (6R)-5,10-methylene-5,6,7,8-tetrahydrofolate + glycine + H2O = (6S)-5,6,7,8-tetrahydrofolate + L-serine. It participates in one-carbon metabolism; tetrahydrofolate interconversion. Its pathway is amino-acid biosynthesis; glycine biosynthesis; glycine from L-serine: step 1/1. Catalyzes the reversible interconversion of serine and glycine with tetrahydrofolate (THF) serving as the one-carbon carrier. This reaction serves as the major source of one-carbon groups required for the biosynthesis of purines, thymidylate, methionine, and other important biomolecules. Also exhibits THF-independent aldolase activity toward beta-hydroxyamino acids, producing glycine and aldehydes, via a retro-aldol mechanism. This Francisella tularensis subsp. holarctica (strain LVS) protein is Serine hydroxymethyltransferase.